The chain runs to 470 residues: GTPase Der (470 aa).

2 EngA-type G domains span residues 32 to 195 (PVVA…PTIS) and 206 to 379 (RRVA…KSWD). GTP-binding positions include 38–45 (GRPNVGKS), 85–89 (DTGGW), 147–150 (NKVD), 212–219 (GKPNVGKS), 259–263 (DTAGL), and 324–327 (NKWD). The KH-like domain maps to 380–462 (TRVSTGRLNT…PIRINVRVRE (83 aa)).

It belongs to the TRAFAC class TrmE-Era-EngA-EngB-Septin-like GTPase superfamily. EngA (Der) GTPase family. In terms of assembly, associates with the 50S ribosomal subunit.

GTPase that plays an essential role in the late steps of ribosome biogenesis. This Mycolicibacterium vanbaalenii (strain DSM 7251 / JCM 13017 / BCRC 16820 / KCTC 9966 / NRRL B-24157 / PYR-1) (Mycobacterium vanbaalenii) protein is GTPase Der.